Reading from the N-terminus, the 624-residue chain is Serine/threonine-protein kinase ppk35 (624 aa).

Positions 162 to 465 (FDLLVKLGQG…TIEIQKHPFF (304 aa)) constitute a Protein kinase domain. Residues 168–176 (LGQGGYGSV) and Lys-191 contribute to the ATP site. The Proton acceptor role is filled by Asp-285. The AGC-kinase C-terminal domain maps to 466-548 (KRLHWNGLRK…KYRPNARKPL (83 aa)). Residues 545-559 (RKPLVGRHREKRQLR) are compositionally biased toward basic residues. The segment at 545–617 (RKPLVGRHRE…VHRLLERKGK (73 aa)) is disordered. Residues 560–574 (KEKPEKKNNSTKQKD) are compositionally biased toward basic and acidic residues. Basic residues predominate over residues 596 to 609 (SKTKGHKTKSSRVH).

It belongs to the protein kinase superfamily. Ser/Thr protein kinase family.

The protein resides in the cytoplasm. It is found in the nucleus. Its subcellular location is the nucleolus. The catalysed reaction is L-seryl-[protein] + ATP = O-phospho-L-seryl-[protein] + ADP + H(+). It carries out the reaction L-threonyl-[protein] + ATP = O-phospho-L-threonyl-[protein] + ADP + H(+). Functionally, has a role in meiosis. This chain is Serine/threonine-protein kinase ppk35 (ppk35), found in Schizosaccharomyces pombe (strain 972 / ATCC 24843) (Fission yeast).